The following is a 406-amino-acid chain: Arginine deiminase (406 aa).

Residue Cys396 is the Amidino-cysteine intermediate of the active site.

Belongs to the arginine deiminase family.

Its subcellular location is the cytoplasm. The enzyme catalyses L-arginine + H2O = L-citrulline + NH4(+). It functions in the pathway amino-acid degradation; L-arginine degradation via ADI pathway; carbamoyl phosphate from L-arginine: step 1/2. In Vibrio vulnificus (strain CMCP6), this protein is Arginine deiminase.